Here is a 1050-residue protein sequence, read N- to C-terminus: Elongation factor 3 (1050 aa).

ADP contacts are provided by Val43 and His45. The stretch at 46–83 is one HEAT 1 repeat; that stretch reads DVPVEFFEDLKKQIQSKDAKVSLAALDAYKHIASTNGL. Residue Ser86 coordinates ADP. HEAT repeat units follow at residues 89-126, 127-165, 169-206, 208-244, 245-282, and 288-326; these read PYVVDLVSEVAVKAGDKNKDVQTAASDALLAIASAITP, TAVKAILPKLIDNLTNTNKWTEKVAILRAVSQLVDTAKA, LRMPELIPVLSESMWDTKKEVKEAATATMTKSTETIDN, DIEKFIPQLISCIAKPTEVPETVHLLGATTFVSEVTM, ATLSIMAPLLSRGLAERDTAIKRKAAVIVDNMCKLVED, and PFMDKLLPGLKNNFANMADPEAREVTQRALNTLRRVGAV. Thr395, His399, and Glu400 together coordinate ADP. ABC transporter domains lie at 429–646 and 672–998; these read DEGE…YYEL and VKVS…KKDD. The ADP site is built by Asn708, Glu927, Asn930, and His956. Residues 980-1050 are disordered; sequence GHNWVQGQGS…DAYVSSDEEF (71 aa). The span at 1013–1037 shows a compositional bias: basic residues; sequence AAKKKKKLSSAELRKKKKERMKKKK.

It belongs to the ABC transporter superfamily. ABCF family. EF3 subfamily. Monomer.

Its subcellular location is the cytoplasm. The catalysed reaction is ATP + H2O = ADP + phosphate + H(+). It functions in the pathway protein biosynthesis; polypeptide chain elongation. In terms of biological role, ribosome-dependent ATPase that functions in cytoplasmic translation elongation. Required for the ATP-dependent release of deacylated tRNA from the ribosomal E-site during protein biosynthesis. Stimulates the eEF1A-dependent binding of aminoacyl-tRNA to the ribosomal A-site, which has reduced affinity for tRNA as long as the E-site is occupied. Assists translation termination by stimulating the release of nascent protein from the ribosome by release factors. In Candida albicans (strain SC5314 / ATCC MYA-2876) (Yeast), this protein is Elongation factor 3 (CEF3).